A 401-amino-acid polypeptide reads, in one-letter code: LysM domain-containing GPI-anchored protein LYP4 (401 aa).

An N-terminal signal peptide occupies residues 1–23 (MPPPLLLLLLLAAAAAAVAPARS). 4 cysteine pairs are disulfide-bonded: cysteine 30–cysteine 96, cysteine 36–cysteine 162, cysteine 94–cysteine 160, and cysteine 96–cysteine 162. 2 consecutive LysM domains span residues 106-156 (VRYV…TLFV) and 175-218 (LTYV…IIVV). 2 disulfide bridges follow: cysteine 223/cysteine 255 and cysteine 250/cysteine 279. Asparagine 240 is a glycosylation site (N-linked (GlcNAc...) asparagine). N-linked (GlcNAc...) asparagine glycosylation is found at asparagine 281, asparagine 288, and asparagine 310. Serine 373 carries GPI-anchor amidated serine lipidation. The propeptide at 374–401 (SGPPPAGRHVVGDVLGAFALCLVGNLLW) is removed in mature form.

As to quaternary structure, interacts with LYP6. Interacts with CEBIP. Interacts with CERK1. Expressed in roots and leaves.

It localises to the cell membrane. Functionally, functions in innate immunity. Functions as a pattern recognition receptor (PRR), sensing bacterial peptidoglycan (PGN) and fungal chitin at the cell surface. Involved in resistance against the bacterial pathogen Xanthomonas oryzae pv. oryzae (Xoo) and the fungal pathogen Magnaporthe oryzae. Binds PGN and fungal chitin in vitro. Involved in microbe-associated molecular patterns (MAMPs) perception and participates in the activation of defense genes against the bacterial pathogen Xanthomonas oryzae pv. oryzicola (Xoc) or the fungal pathogen Magnaporthe oryzae. This Oryza sativa subsp. japonica (Rice) protein is LysM domain-containing GPI-anchored protein LYP4.